Reading from the N-terminus, the 398-residue chain is Stomatin-like protein 1 (398 aa).

The short motif at glycine 6–leucine 10 is the Tyrosine-type lysosomal sorting signal element. Phosphoserine is present on serine 28. The chain crosses the membrane as a helical; Signal-anchor for type III membrane protein span at residues leucine 58–alanine 78. The Cytoplasmic portion of the chain corresponds to leucine 79–lysine 398. Residues lysine 287–lysine 398 enclose the SCP2 domain.

The protein belongs to the band 7/mec-2 family. Interacts with STOM; may redistribute STOM from the plasma membrane to late endosomes. Interacts with FBXW7 isoform 3 and CDK2. In terms of tissue distribution, ubiquitously expressed at low levels. Expression is highest in brain.

The protein localises to the membrane. It localises to the late endosome membrane. Its subcellular location is the membrane raft. It is found in the cell membrane. The protein resides in the cytoplasmic vesicle. May play a role in cholesterol transfer to late endosomes. May play a role in modulating membrane acid-sensing ion channels. Can specifically inhibit proton-gated current of ASIC1 isoform 1. Can increase inactivation speed of ASIC3. May be involved in regulation of proton sensing in dorsal root ganglions. May play a role in protecting FBXW7 isoform 3 from degradation. The chain is Stomatin-like protein 1 (STOML1) from Homo sapiens (Human).